The following is a 312-amino-acid chain: Methionyl-tRNA formyltransferase (312 aa).

Residue 110–113 (SLLP) coordinates (6S)-5,6,7,8-tetrahydrofolate.

Belongs to the Fmt family.

It catalyses the reaction L-methionyl-tRNA(fMet) + (6R)-10-formyltetrahydrofolate = N-formyl-L-methionyl-tRNA(fMet) + (6S)-5,6,7,8-tetrahydrofolate + H(+). Functionally, attaches a formyl group to the free amino group of methionyl-tRNA(fMet). The formyl group appears to play a dual role in the initiator identity of N-formylmethionyl-tRNA by promoting its recognition by IF2 and preventing the misappropriation of this tRNA by the elongation apparatus. The sequence is that of Methionyl-tRNA formyltransferase from Koribacter versatilis (strain Ellin345).